We begin with the raw amino-acid sequence, 351 residues long: UDP-3-O-acylglucosamine N-acyltransferase (351 aa).

His-240 serves as the catalytic Proton acceptor.

Belongs to the transferase hexapeptide repeat family. LpxD subfamily. As to quaternary structure, homotrimer.

The catalysed reaction is a UDP-3-O-[(3R)-3-hydroxyacyl]-alpha-D-glucosamine + a (3R)-hydroxyacyl-[ACP] = a UDP-2-N,3-O-bis[(3R)-3-hydroxyacyl]-alpha-D-glucosamine + holo-[ACP] + H(+). The protein operates within bacterial outer membrane biogenesis; LPS lipid A biosynthesis. Catalyzes the N-acylation of UDP-3-O-acylglucosamine using 3-hydroxyacyl-ACP as the acyl donor. Is involved in the biosynthesis of lipid A, a phosphorylated glycolipid that anchors the lipopolysaccharide to the outer membrane of the cell. The chain is UDP-3-O-acylglucosamine N-acyltransferase from Pseudomonas fluorescens (strain ATCC BAA-477 / NRRL B-23932 / Pf-5).